The primary structure comprises 512 residues: Cytochrome P450 monooxygenase pbrB (512 aa).

The helical transmembrane segment at 6–29 (LSFPAAVGAAFGAFAIYVVARCIY) threads the bilayer. Cysteine 452 provides a ligand contact to heme.

This sequence belongs to the cytochrome P450 family. Requires heme as cofactor.

It is found in the membrane. The protein operates within secondary metabolite biosynthesis; terpenoid biosynthesis. Cytochrome P450 monooxygenase; part of the gene cluster that mediates the biosynthesis of the sesquiterpenoid aspterric acid (AA), an inhibitor of dihydroxy-acid dehydratase (DHAD) effective as an herbicide. PbrB catalyzes the second step within the pathway and converts (-)-daucane produced by the terpene cyclase pbrA into an alpha-epoxy carboxylate intermediate which is further converted into the tricyclic aspterric acid by the cytochrome P450 monooxygenase pbrC. This chain is Cytochrome P450 monooxygenase pbrB, found in Penicillium brasilianum.